A 252-amino-acid chain; its full sequence is Small ribosomal subunit protein uS2 (252 aa).

This sequence belongs to the universal ribosomal protein uS2 family.

In Chlorobium phaeobacteroides (strain DSM 266 / SMG 266 / 2430), this protein is Small ribosomal subunit protein uS2.